Consider the following 377-residue polypeptide: Queuine tRNA-ribosyltransferase (377 aa).

The active-site Proton acceptor is the Asp92. Substrate-binding positions include 92–96 (DSGGF), Asp146, Gln190, and Gly217. The RNA binding stretch occupies residues 248–254 (GVGRPED). The Nucleophile role is filled by Asp267. Residues 272 to 276 (TRHAR) are RNA binding; important for wobble base 34 recognition. 4 residues coordinate Zn(2+): Cys305, Cys307, Cys310, and His337.

Belongs to the queuine tRNA-ribosyltransferase family. As to quaternary structure, homodimer. Within each dimer, one monomer is responsible for RNA recognition and catalysis, while the other monomer binds to the replacement base PreQ1. The cofactor is Zn(2+).

It carries out the reaction 7-aminomethyl-7-carbaguanine + guanosine(34) in tRNA = 7-aminomethyl-7-carbaguanosine(34) in tRNA + guanine. The protein operates within tRNA modification; tRNA-queuosine biosynthesis. Functionally, catalyzes the base-exchange of a guanine (G) residue with the queuine precursor 7-aminomethyl-7-deazaguanine (PreQ1) at position 34 (anticodon wobble position) in tRNAs with GU(N) anticodons (tRNA-Asp, -Asn, -His and -Tyr). Catalysis occurs through a double-displacement mechanism. The nucleophile active site attacks the C1' of nucleotide 34 to detach the guanine base from the RNA, forming a covalent enzyme-RNA intermediate. The proton acceptor active site deprotonates the incoming PreQ1, allowing a nucleophilic attack on the C1' of the ribose to form the product. After dissociation, two additional enzymatic reactions on the tRNA convert PreQ1 to queuine (Q), resulting in the hypermodified nucleoside queuosine (7-(((4,5-cis-dihydroxy-2-cyclopenten-1-yl)amino)methyl)-7-deazaguanosine). In Xylella fastidiosa (strain Temecula1 / ATCC 700964), this protein is Queuine tRNA-ribosyltransferase.